We begin with the raw amino-acid sequence, 219 residues long: Probable octanoyltransferase (219 aa).

The 177-residue stretch at 43–219 folds into the BPL/LPL catalytic domain; the sequence is QPPKPTIITS…NNLDSFLMSK (177 aa). Substrate contacts are provided by residues 83 to 90, 151 to 153, and 164 to 166; these read RGGQTTFH, AIG, and GLA. The active-site Acyl-thioester intermediate is cysteine 182.

Belongs to the LipB family.

The catalysed reaction is octanoyl-[ACP] + L-lysyl-[protein] = N(6)-octanoyl-L-lysyl-[protein] + holo-[ACP] + H(+). It participates in protein modification; protein lipoylation via endogenous pathway; protein N(6)-(lipoyl)lysine from octanoyl-[acyl-carrier-protein]: step 1/2. In terms of biological role, catalyzes the transfer of endogenously produced octanoic acid from octanoyl-acyl-carrier-protein onto the lipoyl domains of lipoate-dependent enzymes. Lipoyl-ACP can also act as a substrate although octanoyl-ACP is likely to be the physiological substrate. The polypeptide is Probable octanoyltransferase (Schizosaccharomyces pombe (strain 972 / ATCC 24843) (Fission yeast)).